Reading from the N-terminus, the 238-residue chain is Uridylate kinase (238 aa).

12 to 15 provides a ligand contact to ATP; it reads KLSG. UMP is bound at residue G54. Positions 55 and 59 each coordinate ATP. UMP-binding positions include D74 and 135–142; that span reads TGNPYFTT. ATP is bound by residues T162, N163, Y168, and D171.

It belongs to the UMP kinase family. In terms of assembly, homohexamer.

It is found in the cytoplasm. It catalyses the reaction UMP + ATP = UDP + ADP. It functions in the pathway pyrimidine metabolism; CTP biosynthesis via de novo pathway; UDP from UMP (UMPK route): step 1/1. Its activity is regulated as follows. Inhibited by UTP. Functionally, catalyzes the reversible phosphorylation of UMP to UDP. The protein is Uridylate kinase of Bradyrhizobium sp. (strain ORS 278).